A 458-amino-acid polypeptide reads, in one-letter code: Retinoic acid receptor gamma (458 aa).

A modulating region spans residues 1–89 (MATNKERLFA…PPPPPRVYKP (89 aa)). R34 bears the Omega-N-methylarginine mark. Positions 58–83 (MASLSVETQSTSSEEMVPSSPSPPPP) are disordered. Positions 62 to 71 (SVETQSTSSE) are enriched in polar residues. NR C4-type zinc fingers lie at residues 90-110 (CFVC…CEGC) and 126-150 (CHRD…LQKC). Positions 90-155 (CFVCNDKSSG…RLQKCFEVGM (66 aa)) form a DNA-binding region, nuclear receptor. The segment at 156 to 184 (SKEAVRNDRNKKKKEVKEEGSPDSYELSP) is hinge. The disordered stretch occupies residues 161–180 (RNDRNKKKKEVKEEGSPDSY). Residues K172 and K401 each participate in a glycyl lysine isopeptide (Lys-Gly) (interchain with G-Cter in SUMO2) cross-link. One can recognise an NR LBD domain in the interval 185–419 (QLEELITKVS…PLIREMLENP (235 aa)). The interval 409–458 (PPLIREMLENPEMFEDDSSKPGPHPKASSEDEAPGGQGKRGQSPQPDQGP) is disordered. Residues 448-458 (RGQSPQPDQGP) show a composition bias toward polar residues.

This sequence belongs to the nuclear hormone receptor family. NR1 subfamily. As to quaternary structure, homodimer. Heterodimer with a RXR molecule. Binds DNA preferentially as a RAR/RXR heterodimer. Forms a complex with PUS1 and the SRA1 RNA in the nucleus.

It is found in the nucleus. Its subcellular location is the cytoplasm. Its function is as follows. Receptor for retinoic acid. Retinoic acid receptors bind as heterodimers to their target response elements in response to their ligands, all-trans or 9-cis retinoic acid, and regulate gene expression in various biological processes. The RAR/RXR heterodimers bind to the retinoic acid response elements (RARE) composed of tandem 5'-AGGTCA-3' sites known as DR1-DR5. In the absence of ligand, acts mainly as an activator of gene expression due to weak binding to corepressors. Required for limb bud development. In concert with RARA or RARB, required for skeletal growth, matrix homeostasis and growth plate function. The chain is Retinoic acid receptor gamma (Rarg) from Mus musculus (Mouse).